The chain runs to 295 residues: GTP-binding protein GEM (295 aa).

The interval 39 to 64 is disordered; the sequence is CNLRNRHSTAPEEHCRRSWSSDSTDS. Residues 81–88 and 190–193 each bind GTP; these read GEQGVGKS and NKSD. Positions 265–284 are calmodulin-binding; it reads ARRFWGKIVAKNNKNMAFKL.

This sequence belongs to the small GTPase superfamily. RGK family. As to quaternary structure, interacts with calmodulin in a Ca(2+)-dependent manner. Calmodulin binding significantly decreases GTP binding. Binds ROCK1. Phosphorylated on tyrosine residues.

It localises to the cell membrane. Its function is as follows. Could be a regulatory protein, possibly participating in receptor-mediated signal transduction at the plasma membrane. Has guanine nucleotide-binding activity but undetectable intrinsic GTPase activity. The chain is GTP-binding protein GEM (Gem) from Mus musculus (Mouse).